Reading from the N-terminus, the 896-residue chain is Translation initiation factor IF-2 (896 aa).

The disordered stretch occupies residues 32-306; sequence LAQAGSSDTK…HKTKKQSEEH (275 aa). 2 stretches are compositionally biased toward polar residues: residues 35 to 48 and 114 to 126; these read AGSS…VSKA and ADST…SSQE. Residues 156-170 are compositionally biased toward basic and acidic residues; sequence ARNEETPIIRTRTEP. Over residues 213–237 the composition is skewed to polar residues; that stretch reads QQTRPSVETASTKQQQPSGTNTRPA. The span at 256 to 280 shows a compositional bias: basic and acidic residues; the sequence is RGPDRDRTKRSDENVKAFTGRDRYG. Residues 401–570 form the tr-type G domain; it reads IRSPIVAFMG…ALQAEVLELK (170 aa). Residues 410-417 are G1; the sequence is GHVDHGKT. 410-417 serves as a coordination point for GTP; the sequence is GHVDHGKT. Residues 435–439 form a G2 region; that stretch reads AITQH. The G3 stretch occupies residues 456-459; sequence DTPG. GTP-binding positions include 456-460 and 510-513; these read DTPGH and NKCD. The segment at 510–513 is G4; sequence NKCD. A G5 region spans residues 546-548; sequence SAK.

Belongs to the TRAFAC class translation factor GTPase superfamily. Classic translation factor GTPase family. IF-2 subfamily.

It is found in the cytoplasm. One of the essential components for the initiation of protein synthesis. Protects formylmethionyl-tRNA from spontaneous hydrolysis and promotes its binding to the 30S ribosomal subunits. Also involved in the hydrolysis of GTP during the formation of the 70S ribosomal complex. The sequence is that of Translation initiation factor IF-2 (infB) from Chlamydia muridarum (strain MoPn / Nigg).